The chain runs to 804 residues: Leucine--tRNA ligase (804 aa).

The 'HIGH' region signature appears at Pro-40–His-51. The 'KMSKS' region signature appears at Lys-576–Ser-580. Position 579 (Lys-579) interacts with ATP.

The protein belongs to the class-I aminoacyl-tRNA synthetase family.

It localises to the cytoplasm. It catalyses the reaction tRNA(Leu) + L-leucine + ATP = L-leucyl-tRNA(Leu) + AMP + diphosphate. In Bacillus velezensis (strain DSM 23117 / BGSC 10A6 / LMG 26770 / FZB42) (Bacillus amyloliquefaciens subsp. plantarum), this protein is Leucine--tRNA ligase.